Reading from the N-terminus, the 78-residue chain is Small ribosomal subunit protein bS18 (78 aa).

It belongs to the bacterial ribosomal protein bS18 family. As to quaternary structure, part of the 30S ribosomal subunit. Forms a tight heterodimer with protein bS6.

Functionally, binds as a heterodimer with protein bS6 to the central domain of the 16S rRNA, where it helps stabilize the platform of the 30S subunit. This Ligilactobacillus salivarius (strain UCC118) (Lactobacillus salivarius) protein is Small ribosomal subunit protein bS18.